The chain runs to 353 residues: MRVLGIETSCDETGIAVYDEYRGLLVHKVYSQGVLHSRYGGVVPELAARDHIRKVIPLIVGSLKQARLISSDIDAVAYTAGPGLIGALLVGASVACSLAYAWNVPVIGVHHMEAHLLTPMLNKKLIISNSTSFSDFIDVIDFPFIALLVSGGHTQLVMVKNIGEYKILGESVDDAVGEVFDKIAVFLGLGYPGGALLSEMAQVGIKGRYIFPKPMINKPGFNFSFSGLKTAVIRAIMSSSNDQQTRADIACGFERAVVETLSVKCYKALKQMKVKYLVISGGVSANTMLRSKLLKMMYSISGKLLCPELEFCTDNGAMVAYTGLIRLKAGLSNRDLSITVKPRWSLESLPSIF.

Fe cation contacts are provided by H111 and H115. Substrate-binding positions include L148–G152, D181, G194, and N286. D314 contributes to the Fe cation binding site.

The protein belongs to the KAE1 / TsaD family. Fe(2+) serves as cofactor.

The protein resides in the cytoplasm. The enzyme catalyses L-threonylcarbamoyladenylate + adenosine(37) in tRNA = N(6)-L-threonylcarbamoyladenosine(37) in tRNA + AMP + H(+). Functionally, required for the formation of a threonylcarbamoyl group on adenosine at position 37 (t(6)A37) in tRNAs that read codons beginning with adenine. Is involved in the transfer of the threonylcarbamoyl moiety of threonylcarbamoyl-AMP (TC-AMP) to the N6 group of A37, together with TsaE and TsaB. TsaD likely plays a direct catalytic role in this reaction. The polypeptide is tRNA N6-adenosine threonylcarbamoyltransferase (Blochmanniella floridana).